A 223-amino-acid chain; its full sequence is NAD(P)H-hydrate epimerase (223 aa).

Positions 9 to 211 (AIKLDEELMG…ELKDKLHLIL (203 aa)) constitute a YjeF N-terminal domain. Residue 60–64 (NNGGD) participates in (6S)-NADPHX binding. K(+) contacts are provided by Asn-61 and Asp-120. Residues 124 to 130 (GFSFKGP) and Asp-153 contribute to the (6S)-NADPHX site. Ser-156 is a binding site for K(+).

Belongs to the NnrE/AIBP family. Requires K(+) as cofactor.

It catalyses the reaction (6R)-NADHX = (6S)-NADHX. The catalysed reaction is (6R)-NADPHX = (6S)-NADPHX. In terms of biological role, catalyzes the epimerization of the S- and R-forms of NAD(P)HX, a damaged form of NAD(P)H that is a result of enzymatic or heat-dependent hydration. This is a prerequisite for the S-specific NAD(P)H-hydrate dehydratase to allow the repair of both epimers of NAD(P)HX. The polypeptide is NAD(P)H-hydrate epimerase (Entamoeba histolytica (strain ATCC 30459 / HM-1:IMSS / ABRM)).